A 794-amino-acid chain; its full sequence is MVHSESSILSSLRGGDGGGIPCSKDELAINGSYTDPMGRRKSKRFKVAAESEFSPDFGSITRQLRSRRMQKEFTVETYETRNVSDVCVLSSQADVELIPGEIVAERDSFKSVDCNDMSVGLTEGAESLGVNMQEPMKDRNMPENTSEQNMVEVHPPSISLPEEDMMGSVCRKSITGTKELHGRTISVGRDLSPNMGSKFSKNGKTAKRSISVEEENLVLEKSDSGDHLGPSPEVLELEKSEVWIITDKGVVMPSPVKPSEKRNGDYGEGSMRKNSERVALDKKRLASKFRLSNGGLPSCSSSGDSARYKVKETMRLFHETCKKIMQEEEARPRKRDGGNFKVVCEASKILKSKGKNLYSGTQIIGTVPGVEVGDEFQYRMELNLLGIHRPSQSGIDYMKDDGGELVATSIVSSGGYNDVLDNSDVLIYTGQGGNVGKKKNNEPPKDQQLVTGNLALKNSINKKNPVRVIRGIKNTTLQSSVVAKNYVYDGLYLVEEYWEETGSHGKLVFKFKLRRIPGQPELPWKEVAKSKKSEFRDGLCNVDITEGKETLPICAVNNLDDEKPPPFIYTAKMIYPDWCRPIPPKSCGCTNGCSKSKNCACIVKNGGKIPYYDGAIVEIKPLVYECGPHCKCPPSCNMRVSQHGIKIKLEIFKTESRGWGVRSLESIPIGSFICEYAGELLEDKQAESLTGKDEYLFDLGDEDDPFTINAAQKGNIGRFINHSCSPNLYAQDVLYDHEEIRIPHIMFFALDNIPPLQELSYDYNYKIDQVYDSNGNIKKKFCYCGSAECSGRLY.

2 disordered regions span residues 187–210 and 254–276; these read VGRDLSPNMGSKFSKNGKTAKRSI and SPVKPSEKRNGDYGEGSMRKNSE. Polar residues predominate over residues 194–203; sequence NMGSKFSKNG. Positions 258–276 are enriched in basic and acidic residues; the sequence is PSEKRNGDYGEGSMRKNSE. The YDG domain maps to 365–515; sequence GTVPGVEVGD…KLVFKFKLRR (151 aa). Residues 585–644 form the Pre-SET domain; that stretch reads KSCGCTNGCSKSKNCACIVKNGGKIPYYDGAIVEIKPLVYECGPHCKCPPSCNMRVSQHG. The 118-residue stretch at 647–764 folds into the SET domain; it reads IKLEIFKTES…PLQELSYDYN (118 aa). Residues 778–794 form the Post-SET domain; the sequence is KKKFCYCGSAECSGRLY.

The protein belongs to the class V-like SAM-binding methyltransferase superfamily. Histone-lysine methyltransferase family. Suvar3-9 subfamily. Expressed in leaves stems and flowers.

It is found in the nucleus. The protein resides in the chromosome. The protein localises to the centromere. The catalysed reaction is N(6)-methyl-L-lysyl(9)-[histone H3] + S-adenosyl-L-methionine = N(6),N(6)-dimethyl-L-lysyl(9)-[histone H3] + S-adenosyl-L-homocysteine + H(+). It carries out the reaction L-lysyl(9)-[histone H3] + S-adenosyl-L-methionine = N(6)-methyl-L-lysyl(9)-[histone H3] + S-adenosyl-L-homocysteine + H(+). Its function is as follows. Histone methyltransferase. Methylates 'Lys-9' of histone H3. H3 'Lys-9' methylation represents a specific tag for epigenetic transcriptional repression. The polypeptide is Histone-lysine N-methyltransferase, H3 lysine-9 specific SUVH5 (SUVH5) (Arabidopsis thaliana (Mouse-ear cress)).